Reading from the N-terminus, the 350-residue chain is Dihydroorotate dehydrogenase (quinone) (350 aa).

FMN is bound by residues 59-63 (AGLDK) and T83. K63 serves as a coordination point for substrate. 108 to 112 (NRMGF) is a binding site for substrate. FMN-binding residues include N136 and N169. N169 serves as a coordination point for substrate. S172 serves as the catalytic Nucleophile. N174 is a substrate binding site. Positions 214 and 242 each coordinate FMN. Substrate is bound at residue 243–244 (NT). FMN-binding positions include G265, G294, and 315 to 316 (YS).

This sequence belongs to the dihydroorotate dehydrogenase family. Type 2 subfamily. In terms of assembly, monomer. It depends on FMN as a cofactor.

It is found in the cell membrane. It catalyses the reaction (S)-dihydroorotate + a quinone = orotate + a quinol. The protein operates within pyrimidine metabolism; UMP biosynthesis via de novo pathway; orotate from (S)-dihydroorotate (quinone route): step 1/1. Catalyzes the conversion of dihydroorotate to orotate with quinone as electron acceptor. The protein is Dihydroorotate dehydrogenase (quinone) of Aromatoleum aromaticum (strain DSM 19018 / LMG 30748 / EbN1) (Azoarcus sp. (strain EbN1)).